Here is a 614-residue protein sequence, read N- to C-terminus: Fructokinase-like 2, chloroplastic (614 aa).

Residues 1–44 (MASLSFTQFLSFPRCNADVPCLLQSHGFVKFRGERWNGKQSFSM) constitute a chloroplast transit peptide. Disordered regions lie at residues 47-75 (GRRKLSESAPLEEEGNDGNGAVVGKKPSK) and 542-592 (GYPP…YVMK). Positions 548-563 (DMEEEEDDEEEDEVES) are enriched in acidic residues. A compositionally biased stretch (basic and acidic residues) spans 571 to 583 (ITEKEYRTSKPYD).

It belongs to the carbohydrate kinase PfkB family. In terms of assembly, interacts with CITRX/TRXz. Binds to FLN1 and PTAC5. Associates with the plastid-encoded RNA polymerase (PEP) complex.

The protein localises to the plastid. It localises to the chloroplast. Functionally, required for proper chloroplast development, most likely through regulating plastid-encoded polymerase (PEP) dependent chloroplast transcription. Acts as a component of the transcriptionally active plastid chromosome that is required for plastid gene expression. This Arabidopsis thaliana (Mouse-ear cress) protein is Fructokinase-like 2, chloroplastic.